The chain runs to 115 residues: NADH-ubiquinone oxidoreductase chain 3 (115 aa).

The next 3 membrane-spanning stretches (helical) occupy residues 3 to 23, 55 to 75, and 84 to 104; these read LMLTLLTNTLLASLLVLIAFW, FFLVAITFLLFDLEIALLLPL, and LNTMLIMALVLISLLAISLAY.

The protein belongs to the complex I subunit 3 family. In terms of assembly, core subunit of respiratory chain NADH dehydrogenase (Complex I) which is composed of 45 different subunits. Interacts with TMEM186. Interacts with TMEM242.

The protein localises to the mitochondrion inner membrane. It catalyses the reaction a ubiquinone + NADH + 5 H(+)(in) = a ubiquinol + NAD(+) + 4 H(+)(out). Core subunit of the mitochondrial membrane respiratory chain NADH dehydrogenase (Complex I) which catalyzes electron transfer from NADH through the respiratory chain, using ubiquinone as an electron acceptor. Essential for the catalytic activity of complex I. The chain is NADH-ubiquinone oxidoreductase chain 3 from Equus caballus (Horse).